Consider the following 258-residue polypeptide: uncharacterized protein (258 aa).

3 Solcar repeats span residues 9–78, 81–160, and 165–246; these read KPIL…AKAR, PGVR…FKKK, and DHVF…VKSH. Helical transmembrane passes span 11–31, 53–73, 87–107, 139–159, 171–191, and 218–239; these read ILVG…LSTI, GLSS…FVYE, LVSA…AEVV, MCGR…QFKK, PKGA…LDVI, and FEKG…YLGT.

The protein belongs to the mitochondrial carrier (TC 2.A.29) family.

It localises to the mitochondrion inner membrane. This is an uncharacterized protein from Schizosaccharomyces pombe (strain 972 / ATCC 24843) (Fission yeast).